We begin with the raw amino-acid sequence, 399 residues long: CCA-adding enzyme (399 aa).

The ATP site is built by Gly-32 and Arg-35. 2 residues coordinate CTP: Gly-32 and Arg-35. Residues Asp-45 and Asp-47 each contribute to the Mg(2+) site. Positions 116, 159, 162, 165, and 168 each coordinate ATP. Positions 116, 159, 162, 165, and 168 each coordinate CTP.

The protein belongs to the tRNA nucleotidyltransferase/poly(A) polymerase family. Bacterial CCA-adding enzyme type 3 subfamily. As to quaternary structure, homodimer. Mg(2+) serves as cofactor.

It catalyses the reaction a tRNA precursor + 2 CTP + ATP = a tRNA with a 3' CCA end + 3 diphosphate. The enzyme catalyses a tRNA with a 3' CCA end + 2 CTP + ATP = a tRNA with a 3' CCACCA end + 3 diphosphate. In terms of biological role, catalyzes the addition and repair of the essential 3'-terminal CCA sequence in tRNAs without using a nucleic acid template. Adds these three nucleotides in the order of C, C, and A to the tRNA nucleotide-73, using CTP and ATP as substrates and producing inorganic pyrophosphate. tRNA 3'-terminal CCA addition is required both for tRNA processing and repair. Also involved in tRNA surveillance by mediating tandem CCA addition to generate a CCACCA at the 3' terminus of unstable tRNAs. While stable tRNAs receive only 3'-terminal CCA, unstable tRNAs are marked with CCACCA and rapidly degraded. The polypeptide is CCA-adding enzyme (Streptococcus pneumoniae (strain CGSP14)).